The sequence spans 201 residues: Ras-related protein Rab-1B (201 aa).

Met1 is subject to N-acetylmethionine. Ser17, Gly18, Val19, Gly20, Lys21, Ser22, Cys23, Tyr33, Thr34, Glu35, Ser36, Ser39, and Thr40 together coordinate GTP. Ser22 is a binding site for Mg(2+). The Switch 1 motif lies at 30–45 (DDTYTESYISTIGVDF). Mg(2+) is bound by residues Thr40 and Asp63. Positions 64-83 (TAGQERFRTVTSSYYRGAHG) are switch 2 region; required for interaction with REP1/CHM. Positions 65-80 (AGQERFRTVTSSYYRG) match the Switch 2 motif. Gly66, Asn121, Lys122, Asp124, Ser151, Ala152, and Lys153 together coordinate GTP. A disordered region spans residues 173–201 (MGPGAASGGERPNLKIDSTPVKSASGGCC). Residues Cys200 and Cys201 are each lipidated (S-geranylgeranyl cysteine). Cys201 is subject to Cysteine methyl ester.

The protein belongs to the small GTPase superfamily. Rab family. As to quaternary structure, interacts with MICAL1 and MICAL2. Interacts (in GTP-bound form) with MICALCL, MICAL1 and MILCAL3. Interacts with GDI1; the interaction requires the GDP-bound state. Interacts with CHM/REP1; the interaction requires the GDP-bound form and is necessary for prenylation by GGTase II. Interacts with RabGAP TBC1D20. Interacts (in GDP-bound form) with lipid phosphatase MTMR6 (via GRAM domain); the interaction regulates MTMR6 recruitment to the endoplasmic reticulum-Golgi intermediate compartment. Interacts (in GDP-bound form) with lipid phosphatase MTMR7. Requires Mg(2+) as cofactor. In terms of processing, prenylated; by GGTase II, only after interaction of the substrate with Rab escort protein 1 (REP1).

The protein resides in the cytoplasm. It localises to the membrane. It is found in the preautophagosomal structure membrane. The protein localises to the perinuclear region. The enzyme catalyses GTP + H2O = GDP + phosphate + H(+). Regulated by guanine nucleotide exchange factors (GEFs) which promote the exchange of bound GDP for free GTP. Regulated by GTPase activating proteins (GAPs) including TBC1D20 which increases the GTP hydrolysis activity. Inhibited by GDP dissociation inhibitors (GDIs). In terms of biological role, the small GTPases Rab are key regulators of intracellular membrane trafficking, from the formation of transport vesicles to their fusion with membranes. Rabs cycle between an inactive GDP-bound form and an active GTP-bound form that is able to recruit to membranes different set of downstream effectors directly responsible for vesicle formation, movement, tethering and fusion. Plays a role in the initial events of the autophagic vacuole development which take place at specialized regions of the endoplasmic reticulum. Regulates vesicular transport between the endoplasmic reticulum and successive Golgi compartments. Required to modulate the compacted morphology of the Golgi. Promotes the recruitment of lipid phosphatase MTMR6 to the endoplasmic reticulum-Golgi intermediate compartment. In Rattus norvegicus (Rat), this protein is Ras-related protein Rab-1B (Rab1b).